The chain runs to 187 residues: BLOC-1-related complex subunit 8 homolog (187 aa).

Residues Gln-165–Asp-187 form a disordered region.

It belongs to the BORCS8 family.

It is found in the lysosome membrane. May participate in the coupling of lysosomes to microtubule plus-end-directed kinesin motor. This chain is BLOC-1-related complex subunit 8 homolog, found in Nematostella vectensis (Starlet sea anemone).